Reading from the N-terminus, the 291-residue chain is Verruculogen synthase (291 aa).

Tyrosine 68 is a catalytic residue.

Belongs to the PhyH family. Homodimer. The cofactor is Fe cation.

The catalysed reaction is fumitremorgin B + 2-oxoglutarate + AH2 + 2 O2 = verruculogen + succinate + A + CO2 + H2O. It participates in mycotoxin biosynthesis. Its function is as follows. Verruculogen synthase; part of the gene cluster that mediates the biosynthesis of fumitremorgins, indole alkaloids that carry not only intriguing chemical structures, but also interesting biological and pharmacological activities. The biosynthesis of fumitremorgin-type alkaloids begins by condensation of the two amino acids L-tryptophan and L-proline to brevianamide F, catalyzed by the non-ribosomal peptide synthetase ftmA. Brevianamide F is then prenylated by the prenyltransferase ftmPT1/ftmB in the presence of dimethylallyl diphosphate, resulting in the formation of tryprostatin B. The three cytochrome P450 monooxygenases, ftmP450-1/ftmC, ftmP450-2/ftmE and ftmP450-3/FtmG, are responsible for the conversion of tryprostatin B to 6-hydroxytryprostatin B, tryprostatin A to fumitremorgin C and fumitremorgin C to 12,13-dihydroxyfumitremorgin C, respectively. The putative methyltransferase ftmMT/ftmD is expected for the conversion of 6-hydroxytryprostatin B to tryprostatin A. FtmPT2/FtmH catalyzes the prenylation of 12,13-dihydroxyfumitre-morgin C in the presence of dimethylallyl diphosphate, resulting in the formation of fumitremorgin B. Fumitremorgin B is further converted to verruculogen by ftmOx1/ftmF via the insertion of an endoperoxide bond between the two prenyl moieties. In some fungal species, verruculogen is further converted to fumitremorgin A, but the enzymes involved in this step have not been identified yet. The chain is Verruculogen synthase from Aspergillus fumigatus (Neosartorya fumigata).